A 282-amino-acid chain; its full sequence is Endonuclease V (282 aa).

Positions 52 and 126 each coordinate Mg(2+). A disordered region spans residues 250–282; sequence SLGLPGPPTPRSPKAQRPVACPKGDSGESSALC.

It belongs to the endonuclease V family. Monomer. Interacts with PABPC1; the interaction is RNA-dependent and stimulates ENDOV activity. Requires Mg(2+) as cofactor.

It localises to the cytoplasm. It is found in the nucleus. Its subcellular location is the nucleolus. The protein resides in the stress granule. Its activity is regulated as follows. Inhibited by normal intracellular concentrations of ATP. In terms of biological role, endoribonuclease that specifically cleaves inosine-containing RNAs: cleaves RNA at the second phosphodiester bond 3' to inosine. Active against both single-stranded and double-stranded RNAs. Has strong preference for single-stranded RNAs (ssRNAs) toward double-stranded RNAs (dsRNAs). Cleaves mRNAs and tRNAs containing inosine. Also able to cleave structure-specific dsRNA substrates containing the specific sites 5'-IIUI-3' and 5'-UIUU-3'. Inosine is present in a number of RNAs following editing; the function of inosine-specific endoribonuclease is still unclear: it could either play a regulatory role in edited RNAs, or be involved in antiviral response by removing the hyperedited long viral dsRNA genome that has undergone A-to-I editing. Binds branched DNA structures. Functionally, endoribonuclease that specifically cleaves inosine-containing RNAs: cleaves RNA at the second phosphodiester bond 3' to inosine. Active against both single-stranded and double-stranded RNAs. Cleaves tRNAs containing inosine. In Homo sapiens (Human), this protein is Endonuclease V (ENDOV).